We begin with the raw amino-acid sequence, 484 residues long: BPI fold-containing family B member 1 (484 aa).

A signal peptide spans 1 to 21 (MAGPWTFTLLCGLLAATLIQA). N48 carries N-linked (GlcNAc...) asparagine glycosylation. Residues C158 and C201 are joined by a disulfide bond. N-linked (GlcNAc...) asparagine glycosylation is found at N264 and N401.

Belongs to the BPI/LBP/Plunc superfamily. Plunc family. As to expression, detected in duodenum mucosal crypts of cholera patients, near Paneth cells (at protein level). Detected in trachea, nasal septal epithelium and lung.

It localises to the secreted. In terms of biological role, may play a role in innate immunity in mouth, nose and lungs. Binds bacterial lipopolysaccharide (LPS) and modulates the cellular responses to LPS. This chain is BPI fold-containing family B member 1 (BPIFB1), found in Homo sapiens (Human).